The chain runs to 324 residues: N-acetyl-gamma-glutamyl-phosphate reductase (324 aa).

Residue Cys131 is part of the active site.

The protein belongs to the NAGSA dehydrogenase family. Type 1 subfamily.

Its subcellular location is the cytoplasm. It catalyses the reaction N-acetyl-L-glutamate 5-semialdehyde + phosphate + NADP(+) = N-acetyl-L-glutamyl 5-phosphate + NADPH + H(+). Its pathway is amino-acid biosynthesis; L-arginine biosynthesis; N(2)-acetyl-L-ornithine from L-glutamate: step 3/4. In terms of biological role, catalyzes the NADPH-dependent reduction of N-acetyl-5-glutamyl phosphate to yield N-acetyl-L-glutamate 5-semialdehyde. This Bradyrhizobium sp. (strain ORS 278) protein is N-acetyl-gamma-glutamyl-phosphate reductase.